A 342-amino-acid polypeptide reads, in one-letter code: UHRF1-like protein (342 aa).

A disordered region spans residues 41–149 (SEATTLATPS…SHPGSEEEDI (109 aa)). Over residues 42-59 (EATTLATPSNLKTAGNQR) the composition is skewed to polar residues. Residues 74–90 (NRSDSPRKRPTKDREDL) are compositionally biased toward basic and acidic residues. Residues 115 to 141 (TREQVTFNSDRDTPNTPSRQIKSTHSH) show a composition bias toward polar residues. The 155-residue stretch at 168–322 (GHIPGIGVGK…LMVCRYAFKR (155 aa)) folds into the YDG domain. A DNA-binding site is contributed by D218. The interval 236 to 257 (KGTKQNPKNLRTAPQTSHQSFD) is disordered. Over residues 238-257 (TKQNPKNLRTAPQTSHQSFD) the composition is skewed to polar residues.

The protein localises to the nucleus. Functionally, involved in the maintenance of DNA methylation. Binds hemimethylated DNA. This chain is UHRF1-like protein, found in Cryptococcus neoformans var. grubii serotype A (strain H99 / ATCC 208821 / CBS 10515 / FGSC 9487) (Filobasidiella neoformans var. grubii).